The following is a 570-amino-acid chain: Dual specificity testis-specific protein kinase 2 (570 aa).

Residues 58–313 enclose the Protein kinase domain; that stretch reads DFTREKIGSG…EIGKTLEEIM (256 aa). ATP contacts are provided by residues 64–72 and Lys-87; that span reads IGSGFFSEV. The active-site Proton acceptor is the Asp-176. At Ser-219 the chain carries Phosphoserine; by autocatalysis. Residues Ser-369, Ser-456, and Ser-460 each carry the phosphoserine modification. A disordered region spans residues 513-570; it reads DCSNPQEENGFVPRPKGTSPCSGAASEEMEVEEERPRRAPVHFSISGISLQTQGEQDG. Positions 558–570 are enriched in polar residues; that stretch reads SGISLQTQGEQDG.

The protein belongs to the protein kinase superfamily. TKL Ser/Thr protein kinase family. Mg(2+) serves as cofactor. Mn(2+) is required as a cofactor. Predominantly expressed in testis and prostate. Found predominantly in non-germinal Sertoli cells.

Its subcellular location is the nucleus. It carries out the reaction L-seryl-[protein] + ATP = O-phospho-L-seryl-[protein] + ADP + H(+). It catalyses the reaction L-threonyl-[protein] + ATP = O-phospho-L-threonyl-[protein] + ADP + H(+). The enzyme catalyses L-tyrosyl-[protein] + ATP = O-phospho-L-tyrosyl-[protein] + ADP + H(+). Activated by autophosphorylation on Ser-219. Functionally, dual specificity protein kinase activity catalyzing autophosphorylation and phosphorylation of exogenous substrates on both serine/threonine and tyrosine residues. Phosphorylates cofilin at 'Ser-3'. May play an important role in spermatogenesis. This is Dual specificity testis-specific protein kinase 2 (Tesk2) from Rattus norvegicus (Rat).